The chain runs to 110 residues: Large ribosomal subunit protein uL22 (110 aa).

Belongs to the universal ribosomal protein uL22 family. Part of the 50S ribosomal subunit.

Its function is as follows. This protein binds specifically to 23S rRNA; its binding is stimulated by other ribosomal proteins, e.g. L4, L17, and L20. It is important during the early stages of 50S assembly. It makes multiple contacts with different domains of the 23S rRNA in the assembled 50S subunit and ribosome. In terms of biological role, the globular domain of the protein is located near the polypeptide exit tunnel on the outside of the subunit, while an extended beta-hairpin is found that lines the wall of the exit tunnel in the center of the 70S ribosome. The protein is Large ribosomal subunit protein uL22 of Acidovorax ebreus (strain TPSY) (Diaphorobacter sp. (strain TPSY)).